The following is a 249-amino-acid chain: Type III pantothenate kinase (249 aa).

Residue 6–13 (DCGNSFIK) participates in ATP binding. Residues tyrosine 93 and 100–103 (GLDR) contribute to the substrate site. Aspartate 102 functions as the Proton acceptor in the catalytic mechanism. Aspartate 122 is a K(+) binding site. Residue threonine 125 coordinates ATP. Position 181 (threonine 181) interacts with substrate.

It belongs to the type III pantothenate kinase family. In terms of assembly, homodimer. The cofactor is NH4(+). Requires K(+) as cofactor.

Its subcellular location is the cytoplasm. It carries out the reaction (R)-pantothenate + ATP = (R)-4'-phosphopantothenate + ADP + H(+). Its pathway is cofactor biosynthesis; coenzyme A biosynthesis; CoA from (R)-pantothenate: step 1/5. Functionally, catalyzes the phosphorylation of pantothenate (Pan), the first step in CoA biosynthesis. This is Type III pantothenate kinase from Pseudomonas syringae pv. syringae (strain B728a).